The primary structure comprises 235 residues: Lipoprotein-releasing system ATP-binding protein LolD (235 aa).

The ABC transporter domain maps to 5 to 235 (LECRDIRKVY…LMTESASVEG (231 aa)). 41–48 (GSSGSGKS) serves as a coordination point for ATP.

Belongs to the ABC transporter superfamily. Lipoprotein translocase (TC 3.A.1.125) family. As to quaternary structure, the complex is composed of two ATP-binding proteins (LolD) and two transmembrane proteins (LolC and LolE).

It localises to the cell inner membrane. Functionally, part of the ABC transporter complex LolCDE involved in the translocation of mature outer membrane-directed lipoproteins, from the inner membrane to the periplasmic chaperone, LolA. Responsible for the formation of the LolA-lipoprotein complex in an ATP-dependent manner. This is Lipoprotein-releasing system ATP-binding protein LolD from Vibrio parahaemolyticus serotype O3:K6 (strain RIMD 2210633).